The chain runs to 1528 residues: Multidrug resistance-associated protein 1 (1528 aa).

Over 1–33 the chain is Extracellular; it reads MALRSFCSADGSDPLWDWNVTWHTSNPDFTKCF. Asn19 is a glycosylation site (N-linked (GlcNAc...) asparagine). A helical membrane pass occupies residues 34-54; that stretch reads QNTVLTWVPCFYLWSCFPLYF. At 55 to 74 the chain is on the cytoplasmic side; it reads FYLSRHDRGYIQMTHLNKTK. Residues 75 to 95 form a helical membrane-spanning segment; it reads TALGFFLWIICWADLFYSFWE. Residues 96–100 are Extracellular-facing; that stretch reads RSQGV. Residues 101–121 form a helical membrane-spanning segment; that stretch reads LRAPVLLVSPTLLGITMLLAT. Topologically, residues 122–133 are cytoplasmic; sequence FLIQLERRKGVQ. A helical transmembrane segment spans residues 134–154; sequence SSGIMLTFWLVALLCALAILR. Topologically, residues 155 to 172 are extracellular; the sequence is SKIISALKKDAHVDVFRD. A helical transmembrane segment spans residues 173 to 193; the sequence is STFYLYFTLVLVQLVLSCFSD. The Cytoplasmic segment spans residues 194–317; the sequence is CSPLFSETVH…KDREPSLFKV (124 aa). Phosphotyrosine is present on Tyr277. Ser290 carries the phosphoserine modification. A helical membrane pass occupies residues 318-338; the sequence is LYKTFGPYFLMSFLYKALHDL. The ABC transmembrane type-1 1 domain occupies 326–609; sequence FLMSFLYKAL…LPMVISSIVQ (284 aa). Residues 339–364 lie on the Extracellular side of the membrane; sequence MMFAGPKILELIINFVNDREAPDWQG. Residues 365-385 form a helical membrane-spanning segment; it reads YFYTALLFVSACLQTLALHQY. Over 386 to 441 the chain is Cytoplasmic; sequence FHICFVSGMRIKTAVVGAVYRKALLITNAARKSSTVGEIVNLMSVDAQRFMDLATY. Residues 442-462 form a helical membrane-spanning segment; that stretch reads INMIWSAPLQVILALYFLWLS. Over 463 to 465 the chain is Extracellular; the sequence is LGP. The helical transmembrane segment at 466–486 threads the bilayer; the sequence is SVLAGVAVMILMVPLNAVMAM. Topologically, residues 487–548 are cytoplasmic; the sequence is KTKTYQVAHM…VLKKSAYLAA (62 aa). Lys504 carries the N6-succinyllysine modification. A helical transmembrane segment spans residues 549–569; sequence VGTFTWVCTPFLVALSTFAVF. Topologically, residues 570-591 are extracellular; it reads VTVDERNILDAKKAFVSLALFN. The helical transmembrane segment at 592 to 612 threads the bilayer; sequence ILRFPLNILPMVISSIVQASV. The Cytoplasmic portion of the chain corresponds to 613 to 963; it reads SLKRLRIFLS…VQLSVYWNYM (351 aa). The ABC transporter 1 domain maps to 644 to 868; that stretch reads ITVKNATFTW…DGAFAEFLRT (225 aa). 678-685 provides a ligand contact to ATP; that stretch reads GQVGCGKS. Disordered stretches follow at residues 876-895 and 909-929; these read LASEDDSVSGSGKESKPVEN and RHLSNSSSHSGDTSQQHSSIA. Phosphoserine is present on residues Ser878, Ser882, Ser912, and Ser927. Polar residues predominate over residues 910-929; the sequence is HLSNSSSHSGDTSQQHSSIA. A helical transmembrane segment spans residues 964 to 984; that stretch reads KAIGLFITFLSIFLFLCNHVS. Residues 971–1253 form the ABC transmembrane type-1 2 domain; it reads TFLSIFLFLC…LVRMSSEMET (283 aa). Residues 985–1022 are Extracellular-facing; that stretch reads ALASNYWLSLWTDDPPVVNGTQANRNFRLSVYGALGIL. Asn1003 carries N-linked (GlcNAc...) asparagine glycosylation. Residues 1023–1043 traverse the membrane as a helical segment; the sequence is QGAAIFGYSMAVSIGGIFASR. The Cytoplasmic segment spans residues 1044 to 1086; that stretch reads RLHLDLLYNVLRSPMSFFERTPSGNLVNRFSKELDTVDSMIPQ. The chain crosses the membrane as a helical span at residues 1087-1107; it reads VIKMFMGSLFSVIGAVIIILL. A topological domain (extracellular) is located at residue Ala1108. The chain crosses the membrane as a helical span at residues 1109-1129; that stretch reads TPIAAVIIPPLGLVYFFVQRF. At 1130–1200 the chain is on the cytoplasmic side; that stretch reads YVASSRQLKR…VANRWLAVRL (71 aa). A helical transmembrane segment spans residues 1201 to 1221; sequence ECVGNCIVLFAALFAVISRHS. The Extracellular segment spans residues 1222 to 1223; the sequence is LS. The chain crosses the membrane as a helical span at residues 1224-1244; sequence AGLVGLSVSYSLQITAYLNWL. Residues 1245–1528 are Cytoplasmic-facing; sequence VRMSSEMETN…YSMAKDAGLV (284 aa). The region spanning 1290–1524 is the ABC transporter 2 domain; the sequence is VEFRDYCLRY…RGIFYSMAKD (235 aa). Residue 1324-1331 coordinates ATP; sequence GRTGAGKS.

The protein belongs to the ABC transporter superfamily. ABCC family. Conjugate transporter (TC 3.A.1.208) subfamily.

It is found in the cell membrane. The protein localises to the basolateral cell membrane. It carries out the reaction ATP + H2O + xenobioticSide 1 = ADP + phosphate + xenobioticSide 2.. The catalysed reaction is an S-substituted glutathione(in) + ATP + H2O = an S-substituted glutathione(out) + ADP + phosphate + H(+). The enzyme catalyses leukotriene C4(in) + ATP + H2O = leukotriene C4(out) + ADP + phosphate + H(+). It catalyses the reaction sphing-4-enine 1-phosphate(in) + ATP + H2O = sphing-4-enine 1-phosphate(out) + ADP + phosphate + H(+). It carries out the reaction 17beta-estradiol 17-O-(beta-D-glucuronate)(in) + ATP + H2O = 17beta-estradiol 17-O-(beta-D-glucuronate)(out) + ADP + phosphate + H(+). The catalysed reaction is vincristine(in) + ATP + H2O = vincristine(out) + ADP + phosphate + H(+). The enzyme catalyses daunorubicin(in) + ATP + H2O = daunorubicin(out) + ADP + phosphate + H(+). It catalyses the reaction 2',3'-cGAMP(in) + ATP + H2O = 2',3'-cGAMP(out) + ADP + phosphate + H(+). It carries out the reaction S-[(2E,6E,10E)-geranylgeranyl]-L-glutathione(in) + ATP + H2O = S-[(2E,6E,10E)-geranylgeranyl]-L-glutathione(out) + ADP + phosphate + H(+). The catalysed reaction is prostaglandin A2-S-(R)-glutathione(in) + ATP + H2O = prostaglandin A2-S-(R)-glutathione(out) + ADP + phosphate + H(+). The enzyme catalyses prostaglandin A2-S-(S)-glutathione(in) + ATP + H2O = prostaglandin A2-S-(S)-glutathione(out) + ADP + phosphate + H(+). With respect to regulation, MK 571 inhibits sphingosine 1-phosphate and leukotriene C4 export. In terms of biological role, mediates export of organic anions and drugs from the cytoplasm. Mediates ATP-dependent transport of glutathione and glutathione conjugates, leukotriene C4, estradiol-17-beta-o-glucuronide, methotrexate, antiviral drugs and other xenobiotics. Confers resistance to anticancer drugs by decreasing accumulation of drugs in cells, and by mediating ATP- and GSH-dependent drug export. Hydrolyzes ATP with low efficiency. Catalyzes the export of sphingosine 1-phosphate from mast cells independently of their degranulation. Participates in inflammatory response by allowing export of leukotriene C4 from leukotriene C4-synthesizing cells. Mediates ATP-dependent, GSH-independent cyclic GMP-AMP (cGAMP) export. Thus, by limiting intracellular cGAMP concentrations negatively regulates the cGAS-STING pathway. Exports S-geranylgeranyl-glutathione (GGG) in lymphoid cells and stromal compartments of lymphoid organs. ABCC1 (via extracellular transport) with GGT5 (via GGG catabolism) establish GGG gradients within lymphoid tissues to position P2RY8-positive lymphocytes at germinal centers in lymphoid follicles and restrict their chemotactic transmigration from blood vessels to the bone marrow parenchyma. Mediates basolateral export of GSH-conjugated R- and S-prostaglandin A2 diastereomers in polarized epithelial cells. The chain is Multidrug resistance-associated protein 1 from Mus musculus (Mouse).